A 607-amino-acid chain; its full sequence is Terpenoid synthase 29 (607 aa).

Positions 358, 362, 502, 506, and 510 each coordinate Mg(2+). The short motif at 358 to 362 (DDTYD) is the DDXXD motif element.

The protein belongs to the terpene synthase family. Tpsa subfamily. Mg(2+) serves as cofactor. It depends on Mn(2+) as a cofactor. Predominantly expressed in flowers but also in siliques, roots, leaves and stems.

The protein localises to the cytoplasm. It participates in secondary metabolite biosynthesis; terpenoid biosynthesis. In Arabidopsis thaliana (Mouse-ear cress), this protein is Terpenoid synthase 29 (TPS29).